The chain runs to 175 residues: B9 domain-containing protein 2 (175 aa).

Residues 2–118 (AEVHVIGQII…ACPTWRPLGS (117 aa)) form the C2 B9-type domain.

The protein belongs to the B9D family. Part of the tectonic-like complex (also named B9 complex). Interacts with TUBG1.

The protein localises to the cytoplasm. It is found in the cytoskeleton. Its subcellular location is the cilium basal body. The protein resides in the cilium axoneme. It localises to the nucleus. Its function is as follows. Component of the tectonic-like complex, a complex localized at the transition zone of primary cilia and acting as a barrier that prevents diffusion of transmembrane proteins between the cilia and plasma membranes. The polypeptide is B9 domain-containing protein 2 (B9D2) (Homo sapiens (Human)).